A 146-amino-acid polypeptide reads, in one-letter code: Hemoglobin subunit beta (146 aa).

V1 carries the N-acetylvaline modification. The region spanning 2–146 (HLSGEEKGAV…VATALAHKYH (145 aa)) is the Globin domain. T12 carries the phosphothreonine modification. The residue at position 44 (S44) is a Phosphoserine. The residue at position 59 (K59) is an N6-acetyllysine. Residue H63 coordinates heme b. K82 is modified (N6-acetyllysine). Residue H92 coordinates heme b. C93 bears the S-nitrosocysteine mark. At K144 the chain carries N6-acetyllysine.

This sequence belongs to the globin family. As to quaternary structure, heterotetramer of two alpha chains and two beta chains. As to expression, red blood cells.

In terms of biological role, involved in oxygen transport from the lung to the various peripheral tissues. The sequence is that of Hemoglobin subunit beta (HBB) from Tadarida brasiliensis (Brazilian free-tailed bat).